We begin with the raw amino-acid sequence, 251 residues long: MLKNRIIPCLDVKNGRVVKGINFVDLKDAGDPVEQAKIYSDGGADEICFLDITASKENRDTIYDVVERTSKKCFVPLTVGGGVRGVEDINKLLNCGADKVSINTAAVQSPEMIIESSKKFGSQCIVVAIDAKKNGDKWEVFTHGGRNNTNIDAIEFAKKMEDNGAGELLVTSMDRDGTQIGYDNDLMFKISSTVNIPIIASGGVGNLDHLVDGIRLGNASAVLAASIFHYGTHSINEAKQYLNSKGIPVRI.

Catalysis depends on residues Asp11 and Asp130.

The protein belongs to the HisA/HisF family. As to quaternary structure, heterodimer of HisH and HisF.

It is found in the cytoplasm. It catalyses the reaction 5-[(5-phospho-1-deoxy-D-ribulos-1-ylimino)methylamino]-1-(5-phospho-beta-D-ribosyl)imidazole-4-carboxamide + L-glutamine = D-erythro-1-(imidazol-4-yl)glycerol 3-phosphate + 5-amino-1-(5-phospho-beta-D-ribosyl)imidazole-4-carboxamide + L-glutamate + H(+). It participates in amino-acid biosynthesis; L-histidine biosynthesis; L-histidine from 5-phospho-alpha-D-ribose 1-diphosphate: step 5/9. Functionally, IGPS catalyzes the conversion of PRFAR and glutamine to IGP, AICAR and glutamate. The HisF subunit catalyzes the cyclization activity that produces IGP and AICAR from PRFAR using the ammonia provided by the HisH subunit. This is Imidazole glycerol phosphate synthase subunit HisF from Pelagibacter ubique (strain HTCC1062).